The chain runs to 127 residues: Holo-[acyl-carrier-protein] synthase (127 aa).

Residues D8 and E59 each coordinate Mg(2+).

This sequence belongs to the P-Pant transferase superfamily. AcpS family. Mg(2+) serves as cofactor.

The protein localises to the cytoplasm. The catalysed reaction is apo-[ACP] + CoA = holo-[ACP] + adenosine 3',5'-bisphosphate + H(+). Functionally, transfers the 4'-phosphopantetheine moiety from coenzyme A to a Ser of acyl-carrier-protein. The polypeptide is Holo-[acyl-carrier-protein] synthase (Rickettsia bellii (strain OSU 85-389)).